A 353-amino-acid chain; its full sequence is MRVSDFDFHLPEARIALRPARPRDAARMLHVASNGVFADRGVRDLPDLLQPGDLMVFNDTRVIPAALKGIRPARAVGGGGPVEVEVNLHKRIDASAWRAFVRPAKRLRMGDEIAFGETLKAEVTGKSEGGDVRLVFNAAGAALDAAIAVAGEMPLPPYIARKRGVDEKDEADYQTLFATHEGSVAAPTAGLHFTPELMAALEARGVEQTRVTLHVGAGTFLPVKSDDTDDHQMHSEWCTVSAEAADAINAAKAEGRRVIPVGTTALRTIESLASGPGIVRAGSRDTDIFLTPGSDFAITDMLMTNFHLPKSTLFMLVSALSGLDVMQRAYAHAIAAEYRFYSYGDACLLERRT.

It belongs to the QueA family. As to quaternary structure, monomer.

The protein resides in the cytoplasm. It catalyses the reaction 7-aminomethyl-7-carbaguanosine(34) in tRNA + S-adenosyl-L-methionine = epoxyqueuosine(34) in tRNA + adenine + L-methionine + 2 H(+). It functions in the pathway tRNA modification; tRNA-queuosine biosynthesis. Transfers and isomerizes the ribose moiety from AdoMet to the 7-aminomethyl group of 7-deazaguanine (preQ1-tRNA) to give epoxyqueuosine (oQ-tRNA). The protein is S-adenosylmethionine:tRNA ribosyltransferase-isomerase of Maricaulis maris (strain MCS10) (Caulobacter maris).